The following is a 475-amino-acid chain: FAD-dependent monooxygenase spyC (475 aa).

The N-terminal stretch at M1–C24 is a signal peptide. FAD contacts are provided by E36, G50, R109, D310, and A323. The helical transmembrane segment at L444 to G464 threads the bilayer.

Belongs to the paxM FAD-dependent monooxygenase family. It depends on FAD as a cofactor.

It localises to the membrane. It catalyses the reaction (2E,6E,10E)-geranylgeranyl-triacetate lactone + AH2 + O2 = (S)-(2E,6E,10E)-epoxygeranylgeranyl-triacetate lactone + A + H2O. It participates in secondary metabolite biosynthesis; terpenoid biosynthesis. In terms of biological role, FAD-dependent monooxygenase spyC; part of the gene cluster that mediates the biosynthesis of meroterpenoids called sartorypyrones. Within the pathway, spyC catalyzes the epoxidation of geranylgeranyl-triacetate lactone at the terminal olein to yield epoxygeranylgeranyl-triacetate lactone. The biosynthesis of sartorypyrones begins with the production of triacetic acid lactone (TAL) by the NR-PKS spyA using one molecule of acetyl-CoA and two molecules of malonyl-CoA. The prenyltransferase spyF then conjugates geranylgeranyl pyrophosphate (GGPP) to TAL to form geranylgeranyl-triacetate lactone, for which the pathway-specific geranylgeranyl pyrophosphate synthase (GGPS) spyE is required to provide GGPP. Subsequently, geranylgeranyl-triacetate lactone is epoxidized at the terminal olein by the FAD-dependent monooxygenase spyC, followed by cyclization of the terpenoid component catalyzed by the terpene cyclase spyD to produce both the bicyclic sartorypyrone F and the monocyclic sartorypyrone D. Finally, the last step of the biosynthesis involves the acetylation of the meroterpenoids sartorypyrones D and F by the acetyltransferase SpyB to produce sartorypyrones A and G, respectively. The sequence is that of FAD-dependent monooxygenase spyC from Aspergillus fumigatus (strain ATCC MYA-4609 / CBS 101355 / FGSC A1100 / Af293) (Neosartorya fumigata).